The chain runs to 430 residues: Enolase (430 aa).

(2R)-2-phosphoglycerate is bound at residue Q167. E209 acts as the Proton donor in catalysis. Positions 245, 286, and 313 each coordinate Mg(2+). Residues K338, R367, S368, and K389 each coordinate (2R)-2-phosphoglycerate. Residue K338 is the Proton acceptor of the active site.

This sequence belongs to the enolase family. The cofactor is Mg(2+).

The protein resides in the cytoplasm. It is found in the secreted. Its subcellular location is the cell surface. The catalysed reaction is (2R)-2-phosphoglycerate = phosphoenolpyruvate + H2O. The protein operates within carbohydrate degradation; glycolysis; pyruvate from D-glyceraldehyde 3-phosphate: step 4/5. Catalyzes the reversible conversion of 2-phosphoglycerate (2-PG) into phosphoenolpyruvate (PEP). It is essential for the degradation of carbohydrates via glycolysis. This is Enolase from Parasynechococcus marenigrum (strain WH8102).